Reading from the N-terminus, the 311-residue chain is 2-dehydro-3-deoxygluconokinase (311 aa).

Substrate contacts are provided by residues 34–35, 106–108, and R166; these read GS and YYR. ATP contacts are provided by residues 164 to 166, 224 to 229, 253 to 256, and S283; these read NIR, KLGPKG, and GAGD. Residues G253 and D256 each coordinate substrate. Residue D256 is the Proton acceptor of the active site. D292 is a binding site for substrate.

The protein belongs to the carbohydrate kinase PfkB family. As to quaternary structure, homotetramer. It depends on a divalent metal cation as a cofactor.

It carries out the reaction 2-dehydro-3-deoxy-D-gluconate + ATP = 2-dehydro-3-deoxy-6-phospho-D-gluconate + ADP + H(+). It participates in carbohydrate acid metabolism; 2-dehydro-3-deoxy-D-gluconate degradation; D-glyceraldehyde 3-phosphate and pyruvate from 2-dehydro-3-deoxy-D-gluconate: step 1/2. Its function is as follows. Involved in the degradation of glucose via the semi-phosphorylative Entner-Doudoroff pathway. Catalyzes the phosphorylation of 2-keto-3-deoxygluconate (KDG) to produce 2-keto-3-deoxy-6-phosphogluconate (KDPG). Can also use GTP, but not ADP or AMP, as a phosphoryl donor and 2-keto-D-gluconate (KG) as a phosphoryl acceptor. In Sulfurisphaera tokodaii (strain DSM 16993 / JCM 10545 / NBRC 100140 / 7) (Sulfolobus tokodaii), this protein is 2-dehydro-3-deoxygluconokinase.